The sequence spans 692 residues: Ribonuclease R (692 aa).

One can recognise an RNB domain in the interval 204 to 525; that stretch reads RKDLRDLLCF…IVHRLLFHPL (322 aa). The S1 motif domain occupies 563–648; it reads KKFLDEQPAT…LTQAIEWTLI (86 aa). The segment at 651 to 692 is disordered; sequence KERSSSKKKKAKAKSNATQVKKKSSSKKKKAVSKAKKNRGGK. Residues 670 to 692 show a composition bias toward basic residues; it reads VKKKSSSKKKKAVSKAKKNRGGK.

This sequence belongs to the RNR ribonuclease family. RNase R subfamily.

The protein resides in the cytoplasm. The catalysed reaction is Exonucleolytic cleavage in the 3'- to 5'-direction to yield nucleoside 5'-phosphates.. Its function is as follows. 3'-5' exoribonuclease that releases 5'-nucleoside monophosphates and is involved in maturation of structured RNAs. The chain is Ribonuclease R from Chlamydia muridarum (strain MoPn / Nigg).